A 75-amino-acid chain; its full sequence is Alpha-elapitoxin-Bc2c (75 aa).

Residues 1–2 form the signal peptide; that stretch reads YT. Cystine bridges form between cysteine 5/cysteine 24, cysteine 17/cysteine 45, cysteine 30/cysteine 34, cysteine 49/cysteine 60, and cysteine 61/cysteine 66.

This sequence belongs to the three-finger toxin family. Long-chain subfamily. Type II alpha-neurotoxin sub-subfamily. Monomer in solution, homodimer in crystal state. As to expression, expressed by the venom gland.

It is found in the secreted. Its function is as follows. Binds to muscular and neuronal nicotinic acetylcholine receptor (nAChR) and inhibits acetylcholine from binding to the receptor, thereby impairing neuromuscular and neuronal transmission. Blocks muscle type nAChR. Also binds with high affinity to alpha-7/CHRNA7 nAChRs. In addition, shows a weak inhibition of neuronal alpha-3-beta-2/CHRNA3-CHRNB2 nAChR. Selectively binds to alpha-1-delta subunit interface of the mouse muscle nicotinic acetylcholine receptor, with a 10-fold higher affinity for the adult than for the fetal receptors. In vivo, when intraperitoneally injected into mice, causes flaccid paralysis and respiratory distress, followed by death within 2-4 hours. In Bungarus candidus (Malayan krait), this protein is Alpha-elapitoxin-Bc2c.